We begin with the raw amino-acid sequence, 567 residues long: TGF-beta receptor type-2 (567 aa).

The N-terminal stretch at 1–23 (MGRGLLRGLWPLHIVLWTRIAST) is a signal peptide. The Extracellular segment spans residues 24–166 (IPPHVPKSVN…SPDLLLVIIQ (143 aa)). Cystine bridges form between Cys51–Cys84, Cys54–Cys71, Cys61–Cys67, Cys77–Cys101, Cys121–Cys136, and Cys138–Cys143. N-linked (GlcNAc...) asparagine glycans are attached at residues Asn70 and Asn94. The chain crosses the membrane as a helical span at residues 167 to 187 (VTGVSLLPPLGIAIAVIIIFY). The Cytoplasmic portion of the chain corresponds to 188–567 (CYRVHRQQKL…PEDGSLNTTK (380 aa)). The 303-residue stretch at 244–546 (IELDTLVGKG…RFSELEHPER (303 aa)) folds into the Protein kinase domain. Residues 250 to 258 (VGKGRFAEV) and Lys277 contribute to the ATP site. Catalysis depends on Asp379, which acts as the Proton acceptor. Phosphoserine is present on residues Ser409, Ser548, and Ser553. The disordered stretch occupies residues 545-567 (ERLSGRSCSQEKIPEDGSLNTTK).

This sequence belongs to the protein kinase superfamily. TKL Ser/Thr protein kinase family. TGFB receptor subfamily. As to quaternary structure, homodimer. Heterohexamer; TGFB1, TGFB2 and TGFB3 homodimeric ligands assemble a functional receptor composed of two TGFBR1 and TGFBR2 heterodimers to form a ligand-receptor heterohexamer. The respective affinity of TGFRB1 and TGFRB2 for the ligands may modulate the kinetics of assembly of the receptor and may explain the different biological activities of TGFB1, TGFB2 and TGFB3. Component of a complex composed of TSC22D1 (via N-terminus), TGFBR1 and TGFBR2; the interaction between TSC22D1 and TGFBR1 is inhibited by SMAD7 and promoted by TGFB1. Interacts with DAXX. Interacts with DYNLT4. Interacts with ZFYVE9; ZFYVE9 recruits SMAD2 and SMAD3 to the TGF-beta receptor. Interacts with and is activated by SCUBE3; this interaction does not affect TGFB1-binding to TGFBR2. Interacts with VPS39; this interaction is independent of the receptor kinase activity and of the presence of TGF-beta. Interacts with CLU. Mg(2+) is required as a cofactor. Requires Mn(2+) as cofactor. Phosphorylated on a Ser/Thr residue in the cytoplasmic domain. Widely expressed in adult. Expressed primarily in mesenchyme and epidermis of the midgestational fetus.

It localises to the cell membrane. Its subcellular location is the membrane raft. It catalyses the reaction L-threonyl-[receptor-protein] + ATP = O-phospho-L-threonyl-[receptor-protein] + ADP + H(+). The catalysed reaction is L-seryl-[receptor-protein] + ATP = O-phospho-L-seryl-[receptor-protein] + ADP + H(+). Functionally, transmembrane serine/threonine kinase forming with the TGF-beta type I serine/threonine kinase receptor, TGFBR1, the non-promiscuous receptor for the TGF-beta cytokines TGFB1, TGFB2 and TGFB3. Transduces the TGFB1, TGFB2 and TGFB3 signal from the cell surface to the cytoplasm and is thus regulating a plethora of physiological and pathological processes including cell cycle arrest in epithelial and hematopoietic cells, control of mesenchymal cell proliferation and differentiation, wound healing, extracellular matrix production, immunosuppression and carcinogenesis. The formation of the receptor complex composed of 2 TGFBR1 and 2 TGFBR2 molecules symmetrically bound to the cytokine dimer results in the phosphorylation and the activation of TGFRB1 by the constitutively active TGFBR2. Activated TGFBR1 phosphorylates SMAD2 which dissociates from the receptor and interacts with SMAD4. The SMAD2-SMAD4 complex is subsequently translocated to the nucleus where it modulates the transcription of the TGF-beta-regulated genes. This constitutes the canonical SMAD-dependent TGF-beta signaling cascade. Also involved in non-canonical, SMAD-independent TGF-beta signaling pathways. Its function is as follows. Has transforming growth factor beta-activated receptor activity. The chain is TGF-beta receptor type-2 (Tgfbr2) from Mus musculus (Mouse).